The primary structure comprises 601 residues: Probable HECT-type ubiquitin ligase-interacting protein creD (601 aa).

Disordered regions lie at residues 374 to 397 (EVDPSGYRTPGPGSGPGTPFGTLS) and 454 to 496 (VSTD…GMAT). The span at 455 to 473 (STDSFGPSSGSNSQSPASP) shows a compositional bias: low complexity. The span at 475-489 (LSRRPSDEGYHDHDY) shows a compositional bias: basic and acidic residues.

The protein belongs to the arrestin family. Interacts with hulA.

Component of the regulatory network controlling carbon source utilization through ubiquitination and deubiquitination involving creA, creB, creC, creD and acrB. May be involved in signaling by recognizing appropriately phosphorylated substrates via its arrestin domains and then recruit a HECT-type ubiquitin ligase such as hulA, leading to ubiquitination of the substrate, providing a link between ubiquitination and phosphorylation in protein regulation and stability. The protein is Probable HECT-type ubiquitin ligase-interacting protein creD (creD) of Aspergillus fumigatus (strain CBS 144.89 / FGSC A1163 / CEA10) (Neosartorya fumigata).